We begin with the raw amino-acid sequence, 164 residues long: Urocortin-3 (164 aa).

The N-terminal stretch at 1–23 is a signal peptide; the sequence is MLMPTYFLLPLLLLLGGPRTSLS. A propeptide spanning residues 24–121 is cleaved from the precursor; the sequence is HKFYNTGPVF…PDKPKSDRGT (98 aa). The tract at residues 58–120 is disordered; the sequence is SFGHLPTQDP…YPDKPKSDRG (63 aa). Basic and acidic residues predominate over residues 110–120; it reads LYPDKPKSDRG. Isoleucine 160 carries the isoleucine amide modification.

It belongs to the sauvagine/corticotropin-releasing factor/urotensin I family. As to quaternary structure, binds with high affinity to CRF receptors 2-alpha and 2-beta. Expressed in some areas of the brain including the hypothalamus, amygdala, and brainstem, but is not evident in the cerebellum, pituitary, or cerebral cortex; it is also expressed peripherally in small intestine and skin.

The protein resides in the secreted. In terms of biological role, suppresses food intake, delays gastric emptying and decreases heat-induced edema. Might represent an endogenous ligand for maintaining homeostasis after stress. In Mus musculus (Mouse), this protein is Urocortin-3 (Ucn3).